An 899-amino-acid chain; its full sequence is Tubulin glycylase 3F (899 aa).

The region spanning 471-835 (FKDVIQIIKN…TEYYQIQNWK (365 aa)) is the TTL domain. Residues 642 to 645 (QKYI), K663, and D665 contribute to the ATP site.

The protein localises to the cytoplasm. It localises to the cytoskeleton. Its subcellular location is the cilium basal body. In terms of biological role, probable glycylase which modifies tubulin, generating side chains of glycine on the gamma-carboxyl groups of specific glutamate residues within the C-terminal tail of tubulin. The chain is Tubulin glycylase 3F (TTLL3F) from Tetrahymena thermophila (strain SB210).